The chain runs to 95 residues: Small ubiquitin-related modifier 2 (95 aa).

Met1 is covalently cross-linked (Peptide (Met-Gly) (interchain with G-Cter in ubiquitin)). Glycyl lysine isopeptide (Lys-Gly) (interchain with G-Cter in SUMO2) cross-links involve residues Lys5 and Lys7. An N6-acetyllysine; alternate modification is found at Lys11. A Glycyl lysine isopeptide (Lys-Gly) (interchain with G-Cter in SUMO); alternate cross-link involves residue Lys11. A Glycyl lysine isopeptide (Lys-Gly) (interchain with G-Cter in SUMO1); alternate cross-link involves residue Lys11. Lys11 participates in a covalent cross-link: Glycyl lysine isopeptide (Lys-Gly) (interchain with G-Cter in SUMO2); alternate. A Glycyl lysine isopeptide (Lys-Gly) (interchain with G-Cter in ubiquitin); alternate cross-link involves residue Lys11. The Ubiquitin-like domain maps to 16–95 (DHINLKVAGQ…VFQQQTGGVY (80 aa)). Lys21 is covalently cross-linked (Glycyl lysine isopeptide (Lys-Gly) (interchain with G-Cter in SUMO2)). Gly93 participates in a covalent cross-link: Glycyl lysine isopeptide (Gly-Lys) (interchain with K-? in acceptor proteins). Positions 94 to 95 (VY) are excised as a propeptide.

Belongs to the ubiquitin family. SUMO subfamily. Interacts with SAE2 and UBE2I. Interacts with ZNF451. Identified in a complex with ZNF451 and UBE2I/UBC9, where one ZNF451 interacts with one UBE2I/UBC9 and two SUMO2 chains, one bound to the UBE2I/UBC9 active site and the other to another region of the same UBE2I/UBC9 molecule. Covalently attached to a number of proteins. Interacts with PELP1. Interacts with USP25; the interaction sumoylates USP25. Interacts with SIMC1, CASP8AP2, RNF111 and SOBP (via SIM domains). Interacts with MTA1. Interacts with HINT1. Interacts with GCNA (via SIM domains); this interaction allows the GCNA recruitment to DPCs sites. Post-translationally, polymeric chains can be formed through Lys-11 cross-linking. Polymeric SUMO2 chains undergo 'Lys-6'-, 'Lys-11'-, 'Lys-48'- and 'Lys-63'-linked polyubiquitination by RNF4. In terms of processing, cleavage of precursor form by SENP1 or SENP2 is necessary for function. Monoubiquitinated N-terminally by UBE2W, which primes it for RNF4-dependent polyubiquitination by the UBE2V1-UBE2N heterodimer.

The protein localises to the nucleus. It localises to the PML body. Ubiquitin-like protein that can be covalently attached to proteins as a monomer or as a lysine-linked polymer. Covalent attachment via an isopeptide bond to its substrates requires prior activation by the E1 complex SAE1-SAE2 and linkage to the E2 enzyme UBE2I, and can be promoted by an E3 ligase such as PIAS1-4, RANBP2 or CBX4. This post-translational modification on lysine residues of proteins plays a crucial role in a number of cellular processes such as nuclear transport, DNA replication and repair, mitosis and signal transduction. Polymeric SUMO2 chains are also susceptible to polyubiquitination which functions as a signal for proteasomal degradation of modified proteins. Plays a role in the regulation of sumoylation status of SETX. The chain is Small ubiquitin-related modifier 2 from Bos taurus (Bovine).